The chain runs to 105 residues: Met repressor (105 aa).

It belongs to the MetJ family. Homodimer.

The protein resides in the cytoplasm. Its function is as follows. This regulatory protein, when combined with SAM (S-adenosylmethionine) represses the expression of the methionine regulon and of enzymes involved in SAM synthesis. The sequence is that of Met repressor from Klebsiella pneumoniae subsp. pneumoniae (strain ATCC 700721 / MGH 78578).